A 357-amino-acid chain; its full sequence is Arginine kinase Pro c 2.0101 (357 aa).

One can recognise a Phosphagen kinase N-terminal domain in the interval 9–91 (KLEEGFKKLE…FDPIIEDYHK (83 aa)). 64 to 68 (GVGIY) provides a ligand contact to L-arginine. A Phosphagen kinase C-terminal domain is found at 119–356 (FVISTRVRCG…LELIKIEKEM (238 aa)). ATP is bound by residues 122–126 (STRVR) and H185. E225 is an L-arginine binding site. R229 serves as a coordination point for ATP. C271 serves as a coordination point for L-arginine. ATP contacts are provided by residues 280 to 284 (RASVH) and 309 to 314 (RGTRGE). Position 314 (E314) interacts with L-arginine.

The protein belongs to the ATP:guanido phosphotransferase family. Glycosylated. Muscle (at protein level).

It carries out the reaction L-arginine + ATP = N(omega)-phospho-L-arginine + ADP + H(+). Its function is as follows. Catalyzes the reversible transfer of high energy ATP gamma-phosphate group to L-arginine. The polypeptide is Arginine kinase Pro c 2.0101 (Procambarus clarkii (Red swamp crayfish)).